The primary structure comprises 410 residues: MEVSEERDLYLHSITAALERLNSAASECQSRLLSEHDGSIEDHSANQTAHDNLVQEAYKFLQIAQGPIDTVATCFERTAHVACARSLLEMGAFEGLPIGGESRSTKELAEDLSVDEALLARLMRNSALFEETGPNQYRHTPFSEAYLRPEIRAMFRFAMDEHMPAHLKMHEFLKSNSWTEPTSTSNNPYTYAHDTNGKSMWEYLSERPTRMASFNDGMTLQAMTELWMIDLFPWESLSDQQPTPTTVVAVDIGGGTGMGISRIRSYCCSLPGKFILQDQAHVIQSADPRGNGIEKMAYDFFEEQPIRGALTYLIRRCLHNWPQESIIQILKNVAAAMQPEKSRLLIEEIIVPDMNAGIEEGWMDMIMMNLGAKQRTLKEWEEVLALAGFEVRKIYQIPGNCHGLLEVWLK.

S-adenosyl-L-methionine is bound by residues 253–254, aspartate 278, 299–300, and arginine 315; these read GG and DF. The active-site Proton acceptor is histidine 319.

It belongs to the class I-like SAM-binding methyltransferase superfamily. Cation-independent O-methyltransferase family. COMT subfamily.

Its pathway is secondary metabolite biosynthesis. Functionally, O-methyltransferase; part of the gene cluster that mediates the biosynthesis of aflavarin, a bicoumarin that exhibits anti-insectan activity against the fungivorous beetle C.hemipterus. The polypeptide is O-methyltransferase afvC (Aspergillus flavus (strain ATCC 200026 / FGSC A1120 / IAM 13836 / NRRL 3357 / JCM 12722 / SRRC 167)).